A 567-amino-acid chain; its full sequence is Potassium-transporting ATPase potassium-binding subunit (567 aa).

11 helical membrane-spanning segments follow: residues 5 to 25 (GWIQ…PLGF), 64 to 84 (TAYA…LYAL), 136 to 156 (GLTV…IALI), 179 to 199 (LYVL…LGIP), 254 to 274 (ISNL…TNVF), 285 to 305 (WAIL…CYWA), 330 to 350 (FGIA…CGAV), 357 to 376 (FTAL…EVIV), 421 to 441 (MLAI…AVVL), 486 to 506 (ITIG…ALAI), and 529 to 549 (LFVG…FFPA).

It belongs to the KdpA family. In terms of assembly, the system is composed of three essential subunits: KdpA, KdpB and KdpC.

It localises to the cell inner membrane. Its function is as follows. Part of the high-affinity ATP-driven potassium transport (or Kdp) system, which catalyzes the hydrolysis of ATP coupled with the electrogenic transport of potassium into the cytoplasm. This subunit binds the periplasmic potassium ions and delivers the ions to the membrane domain of KdpB through an intramembrane tunnel. The sequence is that of Potassium-transporting ATPase potassium-binding subunit from Mesorhizobium japonicum (strain LMG 29417 / CECT 9101 / MAFF 303099) (Mesorhizobium loti (strain MAFF 303099)).